A 252-amino-acid polypeptide reads, in one-letter code: Chitooligosaccharide deacetylase (252 aa).

Mg(2+) is bound by residues His61 and His125.

The protein belongs to the YdjC deacetylase family. ChbG subfamily. As to quaternary structure, homodimer. Requires Mg(2+) as cofactor.

It is found in the cytoplasm. It carries out the reaction N,N'-diacetylchitobiose + H2O = N-acetyl-beta-D-glucosaminyl-(1-&gt;4)-D-glucosamine + acetate. It catalyses the reaction diacetylchitobiose-6'-phosphate + H2O = N'-monoacetylchitobiose-6'-phosphate + acetate. Its pathway is glycan degradation; chitin degradation. Involved in the degradation of chitin. ChbG is essential for growth on the acetylated chitooligosaccharides chitobiose and chitotriose but is dispensable for growth on cellobiose and chitosan dimer, the deacetylated form of chitobiose. Deacetylation of chitobiose-6-P and chitotriose-6-P is necessary for both the activation of the chb promoter by the regulatory protein ChbR and the hydrolysis of phosphorylated beta-glucosides by the phospho-beta-glucosidase ChbF. Catalyzes the removal of only one acetyl group from chitobiose-6-P to yield monoacetylchitobiose-6-P, the inducer of ChbR and the substrate of ChbF. In Citrobacter koseri (strain ATCC BAA-895 / CDC 4225-83 / SGSC4696), this protein is Chitooligosaccharide deacetylase.